A 219-amino-acid polypeptide reads, in one-letter code: Proteasome subunit beta 2 (219 aa).

A propeptide spans 1-25 (removed in mature form; by autocatalysis); that stretch reads MAEWIAGGLEGPAGRGLDERVVRSG. The active-site Nucleophile is the threonine 26.

This sequence belongs to the peptidase T1B family. In terms of assembly, the 20S proteasome core is composed of 14 alpha and 14 beta subunits that assemble into four stacked heptameric rings, resulting in a barrel-shaped structure. The two inner rings, each composed of seven catalytic beta subunits, are sandwiched by two outer rings, each composed of seven alpha subunits. The catalytic chamber with the active sites is on the inside of the barrel. Has a gated structure, the ends of the cylinder being occluded by the N-termini of the alpha-subunits. Is capped at one or both ends by the proteasome regulatory ATPase, PAN.

It is found in the cytoplasm. The enzyme catalyses Cleavage of peptide bonds with very broad specificity.. Its activity is regulated as follows. The formation of the proteasomal ATPase PAN-20S proteasome complex, via the docking of the C-termini of PAN into the intersubunit pockets in the alpha-rings, triggers opening of the gate for substrate entry. Interconversion between the open-gate and close-gate conformations leads to a dynamic regulation of the 20S proteasome proteolysis activity. Functionally, component of the proteasome core, a large protease complex with broad specificity involved in protein degradation. The polypeptide is Proteasome subunit beta 2 (Aeropyrum pernix (strain ATCC 700893 / DSM 11879 / JCM 9820 / NBRC 100138 / K1)).